Reading from the N-terminus, the 600-residue chain is Putative heme-binding protein NP_2262A (600 aa).

A heme-binding site is contributed by histidine 180. Positions 261–289 (TSETGHGGADSQTSSESSGGRPSTDPSHD) are disordered. Positions 270–285 (DSQTSSESSGGRPSTD) are enriched in polar residues. In terms of domain architecture, ABM spans 510–598 (GTMGMFYTVK…VLADRPRHVF (89 aa)).

In the N-terminal section; belongs to the ChdC family.

The protein is Putative heme-binding protein NP_2262A of Natronomonas pharaonis (strain ATCC 35678 / DSM 2160 / CIP 103997 / JCM 8858 / NBRC 14720 / NCIMB 2260 / Gabara) (Halobacterium pharaonis).